The chain runs to 193 residues: Putative nitroreductase HBN1 (193 aa).

Position 2 is an N-acetylserine (Ser2).

It belongs to the nitroreductase family. FMN is required as a cofactor.

The protein localises to the cytoplasm. It is found in the nucleus. This chain is Putative nitroreductase HBN1 (HBN1), found in Saccharomyces cerevisiae (strain ATCC 204508 / S288c) (Baker's yeast).